A 502-amino-acid chain; its full sequence is Transmembrane prolyl 4-hydroxylase (502 aa).

Residues 1 to 29 form a disordered region; the sequence is MAAAAVTGQRPETAAAEEASRPQWAPPDH. Residues 1–60 are Cytoplasmic-facing; sequence MAAAAVTGQRPETAAAEEASRPQWAPPDHCQAQAAAGLGDGEDAPVRPLCKPRGICSRAY. Residues 61–81 traverse the membrane as a helical; Signal-anchor for type II membrane protein segment; sequence FLVLMVFVHLYLGNVLALLLF. Topologically, residues 82–502 are lumenal; sequence VHYSNGDESS…RAYRDARVEL (421 aa). The interval 89 to 111 is disordered; that stretch reads ESSDPGPQHRAQGPGPEPTLGPL. EF-hand domains follow at residues 185-220 and 224-259; these read TMQVSQLDLFRLLDQNRDGHLQLREVLAQTRLGNGW and PESIQEMYAAIKADPDGDGVLSLQEFSNMDLRDFHK. Residues Asp198, Asn200, Asp202, His204, Glu209, Asp237, Asp239, Asp241, and Glu248 each contribute to the Ca(2+) site. The Fe2OG dioxygenase domain occupies 310–460; it reads LSEPLQVVRY…KWIANNWINV (151 aa). Fe cation is bound by residues His328 and Asp330. Asn348 and Asn368 each carry an N-linked (GlcNAc...) asparagine glycan. Residue Glu374 coordinates Fe cation. Asn382 carries N-linked (GlcNAc...) asparagine glycosylation. A 2-oxoglutarate-binding site is contributed by Lys451.

Homodimer. Fe(2+) serves as cofactor. Requires L-ascorbate as cofactor. Glycosylated. As to expression, widely expressed with highest levels in adult pancreas, heart, skeletal muscle, brain, placenta, kidney and adrenal gland. Expressed at lower levels in epiphyseal cartilage and in fibroblasts.

Its subcellular location is the endoplasmic reticulum membrane. It carries out the reaction L-prolyl-[hypoxia-inducible factor alpha subunit] + 2-oxoglutarate + O2 = trans-4-hydroxy-L-prolyl-[hypoxia-inducible factor alpha subunit] + succinate + CO2. Functionally, catalyzes the post-translational formation of 4-hydroxyproline in hypoxia-inducible factor (HIF) alpha proteins. Hydroxylates HIF1A at 'Pro-402' and 'Pro-564'. May function as a cellular oxygen sensor and, under normoxic conditions, may target HIF through the hydroxylation for proteasomal degradation via the von Hippel-Lindau ubiquitination complex. The protein is Transmembrane prolyl 4-hydroxylase (P4HTM) of Homo sapiens (Human).